We begin with the raw amino-acid sequence, 126 residues long: Fluoride-specific ion channel FluC 2 (126 aa).

Helical transmembrane passes span 7–27 (MWVG…GLSI), 37–57 (LGTF…SILF), 65–85 (YGDL…TTFS), and 101–121 (AIAA…AAFG). 2 residues coordinate Na(+): glycine 79 and threonine 82.

This sequence belongs to the fluoride channel Fluc/FEX (TC 1.A.43) family.

It localises to the cell inner membrane. The catalysed reaction is fluoride(in) = fluoride(out). With respect to regulation, na(+) is not transported, but it plays an essential structural role and its presence is essential for fluoride channel function. Functionally, fluoride-specific ion channel. Important for reducing fluoride concentration in the cell, thus reducing its toxicity. The polypeptide is Fluoride-specific ion channel FluC 2 (Yersinia pseudotuberculosis serotype I (strain IP32953)).